Here is a 428-residue protein sequence, read N- to C-terminus: MRKYQARIISIILAMIFIMFWDYLFYFIGKNPINWPVDIVYTAVTLVSVWMLAYYIDEKQQLVKKMKDNEWKYKQLSEEKNRIMDNLQEIVFQTNAKGEITYLNQAWASITGFSISECMGTMYNDYFIKEKHVADHINTQIQNKASSGMFTAKYVTKNGTIFWGEVHYKLYYDRDDQFTGSLGTMSDITERKEAEDELIEINERLARESQKLSITSELAAGIAHEVRNPLTSVSGFLQIMKTQYPDRKDYFDIIFSEIKRIDLVLSELLLLAKPQAITFKTHQLNEILKQVTTLLDTNAILSNIVIEKNFKETDGCMINGDENQLKQVFINIIKNGIEAMPKGGVVTISTAKTASHAVISVKDEGNGMPQEKLKQIGKPFYSTKEKGTGLGLPICLRILKEHDGELKIESEAGKGSVFQVVLPLKSDS.

2 helical membrane-spanning segments follow: residues 8-28 and 36-56; these read IISIILAMIFIMFWDYLFYFI and PVDIVYTAVTLVSVWMLAYYI. Residues 76-147 form the PAS domain; sequence LSEEKNRIMD…NTQIQNKASS (72 aa). The region spanning 148 to 200 is the PAC domain; the sequence is GMFTAKYVTKNGTIFWGEVHYKLYYDRDDQFTGSLGTMSDITERKEAEDELIE. Residues 221–426 enclose the Histidine kinase domain; it reads GIAHEVRNPL…VFQVVLPLKS (206 aa). H224 is subject to Phosphohistidine; by autocatalysis.

Oligomerizes, probably forms homodimers; oligomerization is assisted by FloT. Interacts with FloT. Another study shows only rare colocalization with FloT or FloA membrane assemblies. KinC membrane assemblies are more mobile than FloT membrane assemblies.

It is found in the cell membrane. The protein resides in the membrane raft. The catalysed reaction is ATP + protein L-histidine = ADP + protein N-phospho-L-histidine.. Phosphorylates the sporulation-regulatory protein Spo0A a transcription factor that also controls biofilm formation. Requires FloT and FloA for localization to DRMs and for activity. This is Sporulation kinase C from Bacillus subtilis (strain 168).